The primary structure comprises 126 residues: UPF0102 protein Cphamn1_0017 (126 aa).

Belongs to the UPF0102 family.

The chain is UPF0102 protein Cphamn1_0017 from Chlorobium phaeobacteroides (strain BS1).